Consider the following 241-residue polypeptide: MGIDVKELIRRNRQKHAEFEKKINYKFIDLRLLQKALIHSSYAFEQAQAGKNNERLEFVGDAVLDLVVGNALYRRFPEMREGELTRLRAALVNEGHLATMARKINLGYFLCLGKGEDNSKGREKSSILSCAYEAVIGAIFQDGGYDAVAALVERFFLPVIDRRKEDLLLADAKSRLQEILQEKHNEGPSYRLDNEEGPSHKKRFTISVLFRDEVLGTGEAGSKKEAEQRGAALAIKKIESM.

An RNase III domain is found at 16–144; the sequence is HAEFEKKINY…VIGAIFQDGG (129 aa). Glu-57 contacts Mg(2+). Active-site residues include Asp-61 and Glu-133. Glu-133 serves as a coordination point for Mg(2+). The region spanning 171 to 240 is the DRBM domain; sequence DAKSRLQEIL…AALAIKKIES (70 aa).

It belongs to the ribonuclease III family. In terms of assembly, homodimer. It depends on Mg(2+) as a cofactor.

It is found in the cytoplasm. It carries out the reaction Endonucleolytic cleavage to 5'-phosphomonoester.. Functionally, digests double-stranded RNA. Involved in the processing of primary rRNA transcript to yield the immediate precursors to the large and small rRNAs (23S and 16S). Processes some mRNAs, and tRNAs when they are encoded in the rRNA operon. Processes pre-crRNA and tracrRNA of type II CRISPR loci if present in the organism. This chain is Ribonuclease 3, found in Desulfotalea psychrophila (strain LSv54 / DSM 12343).